The chain runs to 430 residues: MELQSLIDTVSLQKLLLLGALLRLILIAYAFFHDQWFRVKYTDIDYMIVVDGARHMWNGGSPFDRTTFRYTPLLAALVMPSIWIANPMGKLIFASSDLGAAWYCYGVLKSFAKERSAKWMVSLFILFNPIVLSVSTRGNSDMLVTFMSLMVLSKFARRKCYQAAAVLGFAVHFKIYPIIYALPLTLGVWEQSVAASTNTWRRVVKTAVVVSICALMAAISFAVPTVLCYMKYGQQYLNEAFIYHVYREDHRHNFSPYWLLMYLNMARRHLGQGVDFSPRLVAFAPQAVVLSFVSYKLRRNTAHACCVQTVLFVAFNKVCTVQYFVWFIPFLAFLFCEPKEVEDDESGGSGAFKFFSWVKALGVVLMWAATIPLWVTTAVPLEFHGYSDFAQLWIVSCLFFLAMVVLASMLARIAYRVQCTKCSAKSIKVA.

The Cytoplasmic segment spans residues 1-11 (MELQSLIDTVS). The chain crosses the membrane as a helical span at residues 12 to 32 (LQKLLLLGALLRLILIAYAFF). The Lumenal segment spans residues 33 to 72 (HDQWFRVKYTDIDYMIVVDGARHMWNGGSPFDRTTFRYTP). The helical transmembrane segment at 73 to 93 (LLAALVMPSIWIANPMGKLIF) threads the bilayer. The Cytoplasmic segment spans residues 94 to 115 (ASSDLGAAWYCYGVLKSFAKER). Residues 116 to 136 (SAKWMVSLFILFNPIVLSVST) traverse the membrane as a helical segment. The Lumenal segment spans residues 137–163 (RGNSDMLVTFMSLMVLSKFARRKCYQA). The chain crosses the membrane as a helical span at residues 164-184 (AAVLGFAVHFKIYPIIYALPL). Topologically, residues 185–206 (TLGVWEQSVAASTNTWRRVVKT) are cytoplasmic. A helical membrane pass occupies residues 207–227 (AVVVSICALMAAISFAVPTVL). Residues 228–360 (CYMKYGQQYL…AFKFFSWVKA (133 aa)) lie on the Lumenal side of the membrane. The chain crosses the membrane as a helical span at residues 361 to 381 (LGVVLMWAATIPLWVTTAVPL). The Cytoplasmic segment spans residues 382 to 388 (EFHGYSD). Residues 389–409 (FAQLWIVSCLFFLAMVVLASM) form a helical membrane-spanning segment. Topologically, residues 410–430 (LARIAYRVQCTKCSAKSIKVA) are lumenal.

It belongs to the PIGM family.

It is found in the endoplasmic reticulum membrane. It functions in the pathway glycolipid biosynthesis; glycosylphosphatidylinositol-anchor biosynthesis. Functionally, mannosyltransferase involved in glycosylphosphatidylinositol-anchor biosynthesis. Transfers the first alpha-1,4-mannose to GlcN-PI during GPI precursor assembly. This chain is GPI mannosyltransferase 1 (PIGM), found in Trypanosoma brucei brucei (strain 927/4 GUTat10.1).